The chain runs to 355 residues: MYYNNDVSLCSNLDKLIKPSSVKVVSDDSSEKSDIVLEPLESGFALTLGNALRRVMLSSLKGSAVYGIKIEGVTHEFTSIQGVREDVTDIVLNMGMLRCKLNGASNKCLNLNAKGPCQVLAGMIETDDQCSIVNKDLLICTLGQNVELNMTIYVASGKGYLPVTKYKENELLKLMSEQDLIGFIPVNALYSPVNRVSYRVENSRVGQVTDKDKLILSIETDGTISPSQAVDSAARILQEQLQPFISSDVSYKKSQVSSSSGAKDLGYDPVLLRKVDEMELSVRSHNCLKNENITYIGDLVQKTEGEMLRTANFGRKSLNEIKAVLTNFGLSLGMNVLNWPPKDIDELAKQHTDED.

Positions 1–248 (MYYNNDVSLC…EQLQPFISSD (248 aa)) are alpha N-terminal domain (alpha-NTD). The alpha C-terminal domain (alpha-CTD) stretch occupies residues 267-355 (YDPVLLRKVD…ELAKQHTDED (89 aa)).

This sequence belongs to the RNA polymerase alpha chain family. Homodimer. The RNAP catalytic core consists of 2 alpha, 1 beta, 1 beta' and 1 omega subunit. When a sigma factor is associated with the core the holoenzyme is formed, which can initiate transcription.

The catalysed reaction is RNA(n) + a ribonucleoside 5'-triphosphate = RNA(n+1) + diphosphate. Functionally, DNA-dependent RNA polymerase catalyzes the transcription of DNA into RNA using the four ribonucleoside triphosphates as substrates. The polypeptide is DNA-directed RNA polymerase subunit alpha (Wolbachia pipientis wMel).